A 128-amino-acid polypeptide reads, in one-letter code: Translation initiation factor 5A (128 aa).

At lysine 35 the chain carries Hypusine.

This sequence belongs to the eIF-5A family.

The protein localises to the cytoplasm. Functions by promoting the formation of the first peptide bond. This Methanosarcina mazei (strain ATCC BAA-159 / DSM 3647 / Goe1 / Go1 / JCM 11833 / OCM 88) (Methanosarcina frisia) protein is Translation initiation factor 5A (eif5a).